The chain runs to 144 residues: Maximins 7/H6 (144 aa).

An N-terminal signal peptide occupies residues 1–18 (MNFKYIVAVSFLIASAYA). Residues 19-43 (RSEENDEQSLSQRDILEEESLREIR) constitute a propeptide that is removed on maturation. Asn70 is modified (asparagine amide). A propeptide spanning residues 74–123 (TAEDHEVMKRLEAVMRDLDSLDYPEEAAERETRGFNQEEIANLFTKKEKR) is cleaved from the precursor. A Leucine amide modification is found at Leu143.

It belongs to the bombinin family. In terms of tissue distribution, expressed by the skin glands.

It is found in the secreted. Maximin-7 shows antimicrobial activity against bacteria and against the fungus C.albicans. It has little hemolytic activity. In terms of biological role, maximin-H6 shows antimicrobial activity against bacteria and against the fungus C.albicans. Shows strong hemolytic activity. This Bombina maxima (Giant fire-bellied toad) protein is Maximins 7/H6.